The sequence spans 838 residues: MSVYCELVDVVQQIRYKTQIFYETFKRDSIAEQIYNFSNESTSEIDPDIPFSKSLDKDYSLLYRPVSTSNNNATSGNSTPPNNAISPNQQQQQQQQAQQQQQQQQQQQQQQQHQQQQQQQQQQQQQQQQQQQQQQAQQQQQQAQQQAQVQAQQQQQKPTTATTASTVTTTPQQQPSPNNTTSSCTSSSSGSSSGTTNTTSNTTTSTNTSTVTSATNSSTISSLTSTNASTSSAYSTDQQKPNQPPQQPQNISQPQNISQQQNTNNVQQNNQQQQQQQQQQQQQQTSTSPKKCKIVTFTGTSVKLNSKTLQKSDKTSEKENKQQQPDSSKTQQQQQAQQQQSQQQQQAQQQQQQQQQQQQQQQQQQQQQQQQQQQQQQQPVFIFVKEKVNKVNHDLPITPPPSLLTRLVKPNSEEAEYGDIVPPPGMGLTLSIHTGNTGAGQLKVRVIEKATIIQTIFATLKLHHNNGGTGLIPDPKAYNLRIADSNGRIDQDFPPLDPNQYITKFKDEVLVLCPNPKFDLKKSSSSLSISGGVPQQNNNNSVNSNSSNNSNSSNNNMKSSGFQPQQSQQQQQQTQQTQQTQQQAQQAPQQQQSQQQQQQQQQHPQQIQQQLSSNQLQPDQVGGGGGGGGGNFHRTHHRNVSSGPDAPLVVKITLPDSSITKVVFQKTMLLKDLLESTCKKRKLLISDHYFTLENGQTCNGTLPMEKLGGADLILVSRRPIEQMTALSPTDTDSTGSSSDLQQDIFWYDALAWQYKTYEVTKTKKYGPKQDRIIGIDRERVTNMSPKDTETKRPARLIKDISKVALLEKPKYFTIEYNDGKSYIYEAKTTSLANNYLCK.

3 disordered regions span residues 66-97, 157-290, and 305-336; these read VSTSNNNATSGNSTPPNNAISPNQQQQQQQQA, KPTT…TSPK, and NSKTLQKSDKTSEKENKQQQPDSSKTQQQQQA. 3 stretches are compositionally biased toward low complexity: residues 67–97, 157–241, and 248–284; these read STSNNNATSGNSTPPNNAISPNQQQQQQQQA, KPTT…QQKP, and PQNISQPQNISQQQNTNNVQQNNQQQQQQQQQQQQQQ. Basic and acidic residues predominate over residues 310–321; sequence QKSDKTSEKENK. Residues 441–515 form the CRIM domain; that stretch reads QLKVRVIEKA…KDEVLVLCPN (75 aa). 2 disordered regions span residues 522 to 581 and 594 to 646; these read KSSS…QQTQ and QQQQ…GPDA. Low complexity-rich tracts occupy residues 537-556, 563-581, and 594-620; these read NNNNSVNSNSSNNSNSSNNN, QPQQSQQQQQQTQQTQQTQ, and QQQQQQQQQHPQQIQQQLSSNQLQPDQ. Over residues 621 to 631 the composition is skewed to gly residues; sequence VGGGGGGGGGN. An RBD domain is found at 648 to 717; sequence LVVKITLPDS…GGADLILVSR (70 aa).

The protein belongs to the SIN1 family. Interacts with activated RasG. Part of a complex, TORC2, consisting of tor, lst8, piaA and ripA. Additional proteins, such as 14-3-3 and heat-shock proteins, may also belong to the TORC2 complex.

Component of a Ras-regulated pathway involved in integrating chemotaxis and signal relay pathways that are essential for aggregation. This is Ras-interacting protein RIP3 (ripA) from Dictyostelium discoideum (Social amoeba).